We begin with the raw amino-acid sequence, 498 residues long: Nucleobase transporter PlAzg2 (498 aa).

13 consecutive transmembrane segments (helical) span residues 88-108, 118-138, 142-162, 169-189, 203-223, 236-256, 259-279, 312-332, 357-377, 388-408, 412-432, 443-463, and 478-498; these read LLAGTVSFFAAVYIIIVNSSI, AGIIATILASAIGCFIMGLWG, LVIVPGMGINAMFTYTLVQGM, ALAAVMMSGICFFAISMTSLV, AISVGIGLMLVLIGLHKGGVI, FADPGVLVTLATLALTCILYI, VPGNLLLAIIGGSALAYLFKA, TLVIAVFSLTLVIVFENVGLI, ILSGIFGTSPTVSTVEAAAGI, IATGTLFLLSFIAMPVITLVP, VAPILIFIGGLMMPAVRHISF, FIIAFIPLMHSIVDGIAIGFI, and VKPLFYIISLLFVMHFVLQTM.

The protein belongs to the nucleobase:cation symporter-2 (NCS2) (TC 2.A.40) family. Azg-like subfamily.

It is found in the cell membrane. Its activity is regulated as follows. Inhibited by the proton gradient disruptor carbonyl cyanide m-chlorophenylhydrazone (CCCP), but not by the sodium gradient disruptor ouabain. In terms of biological role, transports adenine, guanine, hypoxanthine, xanthine, cytosine and uracil. Transport is probably proton-dependent. In Paenibacillus larvae subsp. larvae (strain NRRL B-3650 / LMG 16245), this protein is Nucleobase transporter PlAzg2.